The primary structure comprises 311 residues: 4-hydroxy-tetrahydrodipicolinate synthase (311 aa).

Residue T51 participates in pyruvate binding. The active-site Proton donor/acceptor is the Y140. Residue K168 is the Schiff-base intermediate with substrate of the active site. I209 contributes to the pyruvate binding site.

This sequence belongs to the DapA family. As to quaternary structure, homotetramer; dimer of dimers.

The protein resides in the cytoplasm. It carries out the reaction L-aspartate 4-semialdehyde + pyruvate = (2S,4S)-4-hydroxy-2,3,4,5-tetrahydrodipicolinate + H2O + H(+). It participates in amino-acid biosynthesis; L-lysine biosynthesis via DAP pathway; (S)-tetrahydrodipicolinate from L-aspartate: step 3/4. Functionally, catalyzes the condensation of (S)-aspartate-beta-semialdehyde [(S)-ASA] and pyruvate to 4-hydroxy-tetrahydrodipicolinate (HTPA). This chain is 4-hydroxy-tetrahydrodipicolinate synthase, found in Streptococcus pneumoniae (strain ATCC BAA-255 / R6).